We begin with the raw amino-acid sequence, 311 residues long: Malate dehydrogenase (311 aa).

NAD(+)-binding positions include 7–13 (GAAGGIG) and Asp34. Substrate contacts are provided by Arg81 and Arg87. NAD(+) is bound by residues Asn94 and 117–119 (ITN). Positions 119 and 153 each coordinate substrate. His177 functions as the Proton acceptor in the catalytic mechanism. NAD(+) is bound at residue Met227.

It belongs to the LDH/MDH superfamily. MDH type 1 family. Homodimer.

It carries out the reaction (S)-malate + NAD(+) = oxaloacetate + NADH + H(+). Functionally, catalyzes the reversible oxidation of malate to oxaloacetate. This is Malate dehydrogenase from Shewanella frigidimarina (strain NCIMB 400).